The chain runs to 220 residues: UPF0319 protein YccT (220 aa).

An N-terminal signal peptide occupies residues 1-20 (MKTGIVTTLIALCLPVSVFA).

It belongs to the UPF0319 family.

The protein is UPF0319 protein YccT of Escherichia coli (strain 55989 / EAEC).